Reading from the N-terminus, the 141-residue chain is Small ribosomal subunit protein uS11 (141 aa).

This sequence belongs to the universal ribosomal protein uS11 family. Part of the 30S ribosomal subunit.

Functionally, located on the platform of the 30S subunit. This is Small ribosomal subunit protein uS11 from Pyrobaculum calidifontis (strain DSM 21063 / JCM 11548 / VA1).